A 375-amino-acid polypeptide reads, in one-letter code: Histidine biosynthesis bifunctional protein HisB (375 aa).

Residues 1–168 (MTPIVFIDRD…GIAHTLADAP (168 aa)) are histidinol-phosphatase. Asp-8 (nucleophile) is an active-site residue. The Mg(2+) site is built by Asp-8, Asp-10, and Asp-128. Catalysis depends on Asp-10, which acts as the Proton donor. The interval 169–375 (RRAVVQRHTK…HVLPSTKGAL (207 aa)) is imidazoleglycerol-phosphate dehydratase.

It in the N-terminal section; belongs to the histidinol-phosphatase family. In the C-terminal section; belongs to the imidazoleglycerol-phosphate dehydratase family. Mg(2+) is required as a cofactor.

It is found in the cytoplasm. It carries out the reaction D-erythro-1-(imidazol-4-yl)glycerol 3-phosphate = 3-(imidazol-4-yl)-2-oxopropyl phosphate + H2O. It catalyses the reaction L-histidinol phosphate + H2O = L-histidinol + phosphate. Its pathway is amino-acid biosynthesis; L-histidine biosynthesis; L-histidine from 5-phospho-alpha-D-ribose 1-diphosphate: step 6/9. The protein operates within amino-acid biosynthesis; L-histidine biosynthesis; L-histidine from 5-phospho-alpha-D-ribose 1-diphosphate: step 8/9. In Xylella fastidiosa (strain 9a5c), this protein is Histidine biosynthesis bifunctional protein HisB.